The chain runs to 360 residues: Uroporphyrinogen decarboxylase (360 aa).

Substrate is bound by residues 31–35 (RQAGR), Asp81, Tyr157, Thr212, and His333.

The protein belongs to the uroporphyrinogen decarboxylase family. In terms of assembly, homodimer.

It is found in the cytoplasm. The catalysed reaction is uroporphyrinogen III + 4 H(+) = coproporphyrinogen III + 4 CO2. It functions in the pathway porphyrin-containing compound metabolism; protoporphyrin-IX biosynthesis; coproporphyrinogen-III from 5-aminolevulinate: step 4/4. Functionally, catalyzes the decarboxylation of four acetate groups of uroporphyrinogen-III to yield coproporphyrinogen-III. The polypeptide is Uroporphyrinogen decarboxylase (Herminiimonas arsenicoxydans).